Consider the following 187-residue polypeptide: UPF0200 protein MM_1313 (187 aa).

9 to 16 (GMPASGKS) is a binding site for ATP.

It belongs to the UPF0200 family.

The sequence is that of UPF0200 protein MM_1313 from Methanosarcina mazei (strain ATCC BAA-159 / DSM 3647 / Goe1 / Go1 / JCM 11833 / OCM 88) (Methanosarcina frisia).